The sequence spans 302 residues: MSTKFNVKTFQGMILALQEYWANQGCTIVQPFDMEVGAGTSHPMTALRALGPEPMAFAYVQPSRRPTDGRYGENPNRLQHYYQFQVVIKPSPDNIQELYLGSLEMLGFDPTQNDIRFVEDNWENPTLGAWGLGWEVWLNGMEVTQFTYFQQVGGLECKPVTGEVTYGLERLAMYIQGVDSVYDLVWSDGPLGKTTYGDVFHQNEVEQSTYNFEHANTDFLFYCFDQYEKEAQELLALEKPLPLPAYERILKAAHSFNLLDARKAISVTERQRYILRIRTLTKGVAEAYYASREALGFPGCKK.

It belongs to the class-II aminoacyl-tRNA synthetase family. Tetramer of two alpha and two beta subunits.

It is found in the cytoplasm. It catalyses the reaction tRNA(Gly) + glycine + ATP = glycyl-tRNA(Gly) + AMP + diphosphate. The chain is Glycine--tRNA ligase alpha subunit from Haemophilus influenzae (strain PittGG).